The chain runs to 361 residues: Peptide chain release factor 1 (361 aa).

Position 236 is an N5-methylglutamine (Gln-236). The segment at 286–306 (AADSQRAEARKGQVGSGDRSE) is disordered.

The protein belongs to the prokaryotic/mitochondrial release factor family. Methylated by PrmC. Methylation increases the termination efficiency of RF1.

The protein localises to the cytoplasm. Functionally, peptide chain release factor 1 directs the termination of translation in response to the peptide chain termination codons UAG and UAA. The chain is Peptide chain release factor 1 from Magnetococcus marinus (strain ATCC BAA-1437 / JCM 17883 / MC-1).